Here is a 355-residue protein sequence, read N- to C-terminus: Anthranilate phosphoribosyltransferase (355 aa).

5-phospho-alpha-D-ribose 1-diphosphate is bound by residues Gly85, 88 to 89 (GD), Thr93, 95 to 98 (NIST), 113 to 121 (KHGNRAASS), and Ser125. Gly85 contacts anthranilate. Residue Ser97 coordinates Mg(2+). Residue Asn116 coordinates anthranilate. Arg171 contacts anthranilate. The Mg(2+) site is built by Asp229 and Glu230.

Belongs to the anthranilate phosphoribosyltransferase family. In terms of assembly, homodimer. Mg(2+) serves as cofactor.

The catalysed reaction is N-(5-phospho-beta-D-ribosyl)anthranilate + diphosphate = 5-phospho-alpha-D-ribose 1-diphosphate + anthranilate. The protein operates within amino-acid biosynthesis; L-tryptophan biosynthesis; L-tryptophan from chorismate: step 2/5. Its function is as follows. Catalyzes the transfer of the phosphoribosyl group of 5-phosphorylribose-1-pyrophosphate (PRPP) to anthranilate to yield N-(5'-phosphoribosyl)-anthranilate (PRA). This chain is Anthranilate phosphoribosyltransferase, found in Acidothermus cellulolyticus (strain ATCC 43068 / DSM 8971 / 11B).